The primary structure comprises 1242 residues: ATP-dependent RNA helicase DHX8 (1242 aa).

Disordered stretches follow at residues 75–283 and 354–449; these read RPSR…DDPE and SMKE…GLLP. Composition is skewed to basic and acidic residues over residues 87 to 97, 113 to 141, and 180 to 196; these read TVGDKKEDKKS, YSKK…KTDM, and RDRD…DRHS. Basic residues-rich tracts occupy residues 197 to 222 and 232 to 252; these read DRRR…RRSR and DRRH…RSRS. A compositionally biased stretch (basic and acidic residues) spans 253–269; sequence RSTERRDRRDRSRDCSE. The region spanning 285 to 356 is the S1 motif domain; the sequence is GKIYSGKIAN…TGQKVSLSMK (72 aa). The span at 388–399 shows a compositional bias: polar residues; sequence FSSSTSMLNLQG. A compositionally biased stretch (acidic residues) spans 439 to 449; sequence PDFDEETGLLP. The Helicase ATP-binding domain maps to 596–759; that stretch reads IKAVTDNQIL…FFKAPIFTIP (164 aa). Position 609-616 (609-616) interacts with ATP; the sequence is GETGSGKT. The DEAH box motif lies at 706–709; it reads DEAH. One can recognise a Helicase C-terminal domain in the interval 777–957; that stretch reads YLDASLITVM…TTVLQLKTMG (181 aa).

Belongs to the DEAD box helicase family. DEAH subfamily. DDX8/PRP22 sub-subfamily. As to quaternary structure, identified in the spliceosome C complex.

Its subcellular location is the nucleus. The enzyme catalyses ATP + H2O = ADP + phosphate + H(+). Functionally, involved in pre-mRNA splicing as component of the spliceosome. Facilitates nuclear export of spliced mRNA by releasing the RNA from the spliceosome. Before and after egg-chamber formation, required for nurse-cell chromatin dispersal (NCCD) probably by playing a role in spliceosome localization to chromatin/interchromatin spaces. The chain is ATP-dependent RNA helicase DHX8 from Drosophila melanogaster (Fruit fly).